The chain runs to 156 residues: Small ribosomal subunit protein uS7 (156 aa).

It belongs to the universal ribosomal protein uS7 family. As to quaternary structure, part of the 30S ribosomal subunit. Contacts proteins S9 and S11.

In terms of biological role, one of the primary rRNA binding proteins, it binds directly to 16S rRNA where it nucleates assembly of the head domain of the 30S subunit. Is located at the subunit interface close to the decoding center, probably blocks exit of the E-site tRNA. In Agrobacterium fabrum (strain C58 / ATCC 33970) (Agrobacterium tumefaciens (strain C58)), this protein is Small ribosomal subunit protein uS7.